Reading from the N-terminus, the 143-residue chain is MAASRVFAQRLASTMKVARPAARIQARTLTTQRMATPFQTIKRQQPSMIQASARQAFAARRQYSSEIADAMVQVSQNIGMGSAAIGLGGAGIGIGVVFGSLLLAVSRNPALRGQLFSYAILGFAFVEAIGLFDLMVAMMCKYV.

The transit peptide at 1–62 (MAASRVFAQR…ARQAFAARRQ (62 aa)) directs the protein to the mitochondrion. Transmembrane regions (helical) follow at residues 85 to 105 (IGLGGAGIGIGVVFGSLLLAV) and 119 to 139 (AILGFAFVEAIGLFDLMVAMM).

It belongs to the ATPase C chain family. F-type ATPases have 2 components, CF(1) - the catalytic core - and CF(0) - the membrane proton channel. CF(1) has five subunits: alpha(3), beta(3), gamma(1), delta(1), epsilon(1). CF(0) has three main subunits: a, b and c.

Its subcellular location is the mitochondrion membrane. Mitochondrial membrane ATP synthase (F(1)F(0) ATP synthase or Complex V) produces ATP from ADP in the presence of a proton gradient across the membrane which is generated by electron transport complexes of the respiratory chain. F-type ATPases consist of two structural domains, F(1) - containing the extramembraneous catalytic core and F(0) - containing the membrane proton channel, linked together by a central stalk and a peripheral stalk. During catalysis, ATP synthesis in the catalytic domain of F(1) is coupled via a rotary mechanism of the central stalk subunits to proton translocation. Part of the complex F(0) domain. A homomeric c-ring of probably 10 subunits is part of the complex rotary element. This is ATP synthase subunit 9, mitochondrial (atp9) from Emericella nidulans (strain FGSC A4 / ATCC 38163 / CBS 112.46 / NRRL 194 / M139) (Aspergillus nidulans).